We begin with the raw amino-acid sequence, 70 residues long: Movement protein TGBp3 (70 aa).

Residues 1–4 are Lumenal-facing; it reads MFPR. Residues 5–25 form a helical membrane-spanning segment; it reads SGLGLAVAAAVVAYLVLLLAQ. The Cytoplasmic segment spans residues 26–70; it reads QLYMSNSSQCTIVITGESVSVVGCVYSEAFIELVKGLKPYYHPLG.

The protein belongs to the Tymovirales TGBp3 protein family.

Its subcellular location is the host endoplasmic reticulum membrane. Its function is as follows. Plays a role in viral cell-to-cell propagation, by facilitating genome transport to neighboring plant cells through plasmosdesmata. May induce the formation of granular vesicles derived from the Endoplasmic reticulum, which align on actin filaments. This chain is Movement protein TGBp3, found in Crataegus (hawthorn).